Consider the following 1380-residue polypeptide: Inverted formin-2 (1380 aa).

The 330-residue stretch at 1-330 (MSLKEGAHTK…RAVLLADDCQ (330 aa)) folds into the GBD/FH3 domain. Disordered stretches follow at residues 341–391 (LVTS…SGIP) and 440–541 (ISTS…PPPL). Over residues 343–352 (TSKKHPSKEK) the composition is skewed to basic residues. Basic and acidic residues predominate over residues 367–385 (QTDKPKDESCEEKTVKKDP). Positions 432–592 (VVSNAIDRIS…DYSLGYLPKA (161 aa)) constitute an FH1 domain. 2 stretches are compositionally biased toward pro residues: residues 446 to 470 (LPPP…PPLP) and 478 to 541 (TPPP…PPPL). Residues 593–981 (YFKVNKPTLK…AEKRKKQLAD (389 aa)) form the FH2 domain. Coiled-coil stretches lie at residues 879-930 (LKKL…KLAD) and 956-991 (LKAK…KGEN). The WH2 domain occupies 1009 to 1024 (DALLADIKKGFQLRKT). 3 disordered regions span residues 1026–1049 (KTKT…DGTD), 1188–1244 (HKER…LSEA), and 1260–1380 (FQSS…CVVQ). Composition is skewed to polar residues over residues 1206 to 1244 (GTES…LSEA), 1260 to 1284 (FQSS…QAQR), and 1294 to 1303 (TRDTTVTEGS). The span at 1306-1322 (EEDKCNDEGYPEHKTMG) shows a compositional bias: basic and acidic residues. Positions 1328-1339 (SSSHSTTLQQSS) are enriched in low complexity. The segment covering 1345-1359 (VKRGSSKHKKKRRSS) has biased composition (basic residues).

It belongs to the formin homology family.

The protein is Inverted formin-2 (inf2) of Xenopus tropicalis (Western clawed frog).